The primary structure comprises 1409 residues: DNA-directed RNA polymerase subunit beta' (1409 aa).

Cysteine 70, cysteine 72, cysteine 85, and cysteine 88 together coordinate Zn(2+). 3 residues coordinate Mg(2+): aspartate 461, aspartate 463, and aspartate 465. Cysteine 833, cysteine 907, cysteine 914, and cysteine 917 together coordinate Zn(2+). The segment at 1389-1409 is disordered; that stretch reads EPVAQAAESEDVPDVSQQEAA.

Belongs to the RNA polymerase beta' chain family. As to quaternary structure, the RNAP catalytic core consists of 2 alpha, 1 beta, 1 beta' and 1 omega subunit. When a sigma factor is associated with the core the holoenzyme is formed, which can initiate transcription. Mg(2+) serves as cofactor. Zn(2+) is required as a cofactor.

It carries out the reaction RNA(n) + a ribonucleoside 5'-triphosphate = RNA(n+1) + diphosphate. In terms of biological role, DNA-dependent RNA polymerase catalyzes the transcription of DNA into RNA using the four ribonucleoside triphosphates as substrates. The protein is DNA-directed RNA polymerase subunit beta' of Pelobacter propionicus (strain DSM 2379 / NBRC 103807 / OttBd1).